The chain runs to 433 residues: Dihydrolipoyllysine-residue acetyltransferase component of pyruvate dehydrogenase complex (433 aa).

The 76-residue stretch at 2–77 folds into the Lipoyl-binding domain; that stretch reads AFEFRLPDIG…VVGDVIVKID (76 aa). Residue Lys43 is modified to N6-lipoyllysine. 2 disordered regions span residues 80 to 134 and 164 to 204; these read DAEE…PSVR and YLNG…FPET. 2 stretches are compositionally biased toward basic and acidic residues: residues 84-103 and 117-126; these read MQFK…KEQE and EKTEVDESKT. Residues 128–165 enclose the Peripheral subunit-binding (PSBD) domain; sequence KAMPSVRKYARENGVNIKAVNGSGKNGRITKEDIDAYL. Residues 166 to 185 are compositionally biased toward low complexity; that stretch reads NGGSSEEGSNTSAASESTSS. His404 is a catalytic residue.

The protein belongs to the 2-oxoacid dehydrogenase family. As to quaternary structure, forms a 24-polypeptide structural core with octahedral symmetry. The cofactor is (R)-lipoate.

It carries out the reaction N(6)-[(R)-dihydrolipoyl]-L-lysyl-[protein] + acetyl-CoA = N(6)-[(R)-S(8)-acetyldihydrolipoyl]-L-lysyl-[protein] + CoA. Functionally, the pyruvate dehydrogenase complex catalyzes the overall conversion of pyruvate to acetyl-CoA and CO(2). It contains multiple copies of three enzymatic components: pyruvate dehydrogenase (E1), dihydrolipoamide acetyltransferase (E2) and lipoamide dehydrogenase (E3). The chain is Dihydrolipoyllysine-residue acetyltransferase component of pyruvate dehydrogenase complex (pdhC) from Staphylococcus epidermidis (strain ATCC 35984 / DSM 28319 / BCRC 17069 / CCUG 31568 / BM 3577 / RP62A).